Here is a 197-residue protein sequence, read N- to C-terminus: Wadjet protein JetB (197 aa).

Functionally, component of antiplasmid transformation system Wadjet type I, composed of JetA, JetB, JetC and JetD. Expression of Wadjet type I in B.subtilis (strain BEST7003) reduces the transformation efficiency of plasmid pHCMC05. This is Wadjet protein JetB from Bacillus cereus (strain Q1).